A 491-amino-acid chain; its full sequence is Glutamyl-tRNA(Gln) amidotransferase subunit A (491 aa).

Residues lysine 77 and serine 152 each act as charge relay system in the active site. The active-site Acyl-ester intermediate is serine 176.

It belongs to the amidase family. GatA subfamily. In terms of assembly, heterotrimer of A, B and C subunits.

It catalyses the reaction L-glutamyl-tRNA(Gln) + L-glutamine + ATP + H2O = L-glutaminyl-tRNA(Gln) + L-glutamate + ADP + phosphate + H(+). In terms of biological role, allows the formation of correctly charged Gln-tRNA(Gln) through the transamidation of misacylated Glu-tRNA(Gln) in organisms which lack glutaminyl-tRNA synthetase. The reaction takes place in the presence of glutamine and ATP through an activated gamma-phospho-Glu-tRNA(Gln). The chain is Glutamyl-tRNA(Gln) amidotransferase subunit A from Chlamydia trachomatis serovar L2 (strain ATCC VR-902B / DSM 19102 / 434/Bu).